We begin with the raw amino-acid sequence, 339 residues long: Neutrophil cytosol factor 4 (339 aa).

The 122-residue stretch at 19–140 (DVAVSANIAD…IFFYQSAYDA (122 aa)) folds into the PX domain. A 1,2-diacyl-sn-glycero-3-phospho-(1D-myo-inositol-3-phosphate) is bound by residues 58–60 (RYR) and 92–94 (KVY). Thr154 carries the phosphothreonine modification. Positions 170–229 (MEAPRAEALFDFTGNSKLELSFKAGDVIFLLSKINKDWLEGTSQGATGIFPGSFVKILKD) constitute an SH3 domain. The 93-residue stretch at 237 to 329 (TNWLRCYFYE…FPWKLHVTQK (93 aa)) folds into the PB1 domain. The residue at position 315 (Ser315) is a Phosphoserine.

Component of the phagocyte NADPH oxidase complex composed of an obligatory core heterodimer formed by the membrane proteins CYBA and CYBB and the cytosolic regulatory subunits NCF1/p47-phox, NCF2/p67-phox, NCF4/p40-phox and the small GTPase RAC1 or RAC2. Part of a cytosolic complex composed at least by NCF1, NCF2 and NCF4. Interacts with NCF2. Interacts with NCF1. The NCF2-NCF4 complex interacts with GBP7 (via GB1/RHD3-type G domain).

The protein localises to the cytoplasm. It is found in the cytosol. The protein resides in the endosome membrane. It localises to the membrane. Its function is as follows. Subunit of the phagocyte NADPH oxidase complex that mediates the transfer of electrons from cytosolic NADPH to O2 to produce the superoxide anion (O2(-)). In the activated complex, electrons are first transferred from NADPH to flavin adenine dinucleotide (FAD) and subsequently transferred via two heme molecules to molecular oxygen, producing superoxide through an outer-sphere reaction. Activation of the NADPH oxidase complex is initiated by the assembly of cytosolic subunits of the NADPH oxidase complex with the core NADPH oxidase complex to form a complex at the plasma membrane or phagosomal membrane. This activation process is initiated by phosphorylation dependent binding of the cytosolic NCF1/p47-phox subunit to the C-terminus of CYBA/p22-phox. The chain is Neutrophil cytosol factor 4 from Mus musculus (Mouse).